A 231-amino-acid polypeptide reads, in one-letter code: 5'-methylthioadenosine/S-adenosylhomocysteine nucleosidase (231 aa).

Catalysis depends on glutamate 13, which acts as the Proton acceptor. Substrate contacts are provided by residues glycine 79, methionine 154, and 175 to 176; that span reads ME. Aspartate 199 serves as the catalytic Proton donor.

Belongs to the PNP/UDP phosphorylase family. MtnN subfamily.

It carries out the reaction S-adenosyl-L-homocysteine + H2O = S-(5-deoxy-D-ribos-5-yl)-L-homocysteine + adenine. The catalysed reaction is S-methyl-5'-thioadenosine + H2O = 5-(methylsulfanyl)-D-ribose + adenine. It catalyses the reaction 5'-deoxyadenosine + H2O = 5-deoxy-D-ribose + adenine. Its pathway is amino-acid biosynthesis; L-methionine biosynthesis via salvage pathway; S-methyl-5-thio-alpha-D-ribose 1-phosphate from S-methyl-5'-thioadenosine (hydrolase route): step 1/2. Its function is as follows. Catalyzes the irreversible cleavage of the glycosidic bond in both 5'-methylthioadenosine (MTA) and S-adenosylhomocysteine (SAH/AdoHcy) to adenine and the corresponding thioribose, 5'-methylthioribose and S-ribosylhomocysteine, respectively. Also cleaves 5'-deoxyadenosine, a toxic by-product of radical S-adenosylmethionine (SAM) enzymes, into 5-deoxyribose and adenine. The protein is 5'-methylthioadenosine/S-adenosylhomocysteine nucleosidase of Marinomonas sp. (strain MWYL1).